A 156-amino-acid polypeptide reads, in one-letter code: Small ribosomal subunit protein uS7 (156 aa).

The protein belongs to the universal ribosomal protein uS7 family. As to quaternary structure, part of the 30S ribosomal subunit. Contacts proteins S9 and S11.

Its function is as follows. One of the primary rRNA binding proteins, it binds directly to 16S rRNA where it nucleates assembly of the head domain of the 30S subunit. Is located at the subunit interface close to the decoding center, probably blocks exit of the E-site tRNA. The polypeptide is Small ribosomal subunit protein uS7 (Xanthobacter autotrophicus (strain ATCC BAA-1158 / Py2)).